The primary structure comprises 194 residues: Large ribosomal subunit protein bL25 (194 aa).

Belongs to the bacterial ribosomal protein bL25 family. CTC subfamily. In terms of assembly, part of the 50S ribosomal subunit; part of the 5S rRNA/L5/L18/L25 subcomplex. Contacts the 5S rRNA. Binds to the 5S rRNA independently of L5 and L18.

Functionally, this is one of the proteins that binds to the 5S RNA in the ribosome where it forms part of the central protuberance. This Geobacter sulfurreducens (strain ATCC 51573 / DSM 12127 / PCA) protein is Large ribosomal subunit protein bL25.